We begin with the raw amino-acid sequence, 159 residues long: MTLSILVAHDLQRVIGFENQLPWHLPNDLKHVKKLSTGHTLVMGRKTFESIGKPLPNRRNVVLTSDTSFNVEGVDVIHSIEDIYQLPGHVFIFGGQTLFEEMIDKVDDMYITVIEGKFRGDTFFPPYTFEDWEVASSVEGKLDEKNTIPHTFLHLIRKK.

The DHFR domain occupies 2-157 (TLSILVAHDL…IPHTFLHLIR (156 aa)). 6–8 (LVA) is a substrate binding site. NADP(+)-binding positions include 7–8 (VA) and 15–20 (IGFENQ). D28 contacts substrate. 44–47 (GRKT) contributes to the NADP(+) binding site. Position 58 (R58) interacts with substrate. NADP(+) is bound by residues 63-66 (LTSD) and 93-98 (FGGQTL). T112 serves as a coordination point for substrate.

Belongs to the dihydrofolate reductase family.

It carries out the reaction (6S)-5,6,7,8-tetrahydrofolate + NADP(+) = 7,8-dihydrofolate + NADPH + H(+). It functions in the pathway cofactor biosynthesis; tetrahydrofolate biosynthesis; 5,6,7,8-tetrahydrofolate from 7,8-dihydrofolate: step 1/1. Functionally, key enzyme in folate metabolism. Catalyzes an essential reaction for de novo glycine and purine synthesis, and for DNA precursor synthesis. This is Dihydrofolate reductase (folA) from Staphylococcus aureus (strain COL).